The chain runs to 87 residues: UPF0213 protein SSA_0709 (87 aa).

The region spanning 3 to 78 (NKAYMYVLEC…KKKTRQAKLA (76 aa)) is the GIY-YIG domain.

The protein belongs to the UPF0213 family.

In Streptococcus sanguinis (strain SK36), this protein is UPF0213 protein SSA_0709.